The chain runs to 226 residues: Ribosome-recycling factor, mitochondrial (226 aa).

Belongs to the RRF family.

The protein localises to the mitochondrion. Functionally, necessary for protein synthesis in mitochondria. Functions as a ribosome recycling factor in mitochondria. The chain is Ribosome-recycling factor, mitochondrial (RRF1) from Eremothecium gossypii (strain ATCC 10895 / CBS 109.51 / FGSC 9923 / NRRL Y-1056) (Yeast).